A 258-amino-acid chain; its full sequence is Alpha-fibrinogenase albofibrase (258 aa).

The first 18 residues, 1–18, serve as a signal peptide directing secretion; it reads MVLIRVLANLLILQLSYA. A propeptide spanning residues 19–24 is cleaved from the precursor; the sequence is QKSSEL. The 225-residue stretch at 25–249 folds into the Peptidase S1 domain; that stretch reads VVGGDECNIN…YNDWIQSIIA (225 aa). 6 disulfide bridges follow: Cys-31/Cys-163, Cys-50/Cys-66, Cys-98/Cys-256, Cys-142/Cys-210, Cys-174/Cys-189, and Cys-200/Cys-225. A glycan (N-linked (GlcNAc...) asparagine) is linked at Asn-44. Active-site charge relay system residues include His-65 and Asp-110. Ser-204 functions as the Charge relay system in the catalytic mechanism.

It belongs to the peptidase S1 family. Snake venom subfamily. As to quaternary structure, monomer. Expressed by the venom gland.

Its subcellular location is the secreted. The recombinant protein has fibrinogenolytic activity against the Aalpha chain (FGA) of fibrinogen. Activates plasminogen (PLG) (is 4-fold less active than urokinase). Has weak thrombin-like enzyme activity. Has enzymatic activity against a trypsin-like substrate (S-3013) and shows a weaker activity on an activated protein C substrate (S-3125). The sequence is that of Alpha-fibrinogenase albofibrase from Trimeresurus albolabris (White-lipped pit viper).